The primary structure comprises 1891 residues: Transcription initiation factor TFIID subunit 1 (1891 aa).

Disordered stretches follow at residues 1-34 (MGPG…AGGG), 154-180 (KLMP…GVSE), and 197-224 (ASEK…SESK). The region spanning 1-435 (MGPGWAGLLQ…VTQLHWEDDI (435 aa)) is the Protein kinase 1 domain. Positions 156–165 (MPPPPPPPGP) are enriched in pro residues. Residues 197 to 208 (ASEKVDFSSSSD) show a composition bias toward low complexity. Position 328 is a phosphoserine; by autocatalysis (Ser-328). Residues 535–556 (PDEKEEATSNSPSKENKKESSL) are disordered. The segment at 538–997 (KEEATSNSPS…KIPNKPTQQK (460 aa)) is histone acetyltransferase (HAT). Lys-565 is subject to N6-acetyllysine. Glycyl lysine isopeptide (Lys-Gly) (interchain with G-Cter in SUMO2) cross-links involve residues Lys-570 and Lys-583. 3 disordered regions span residues 990-1009 (PNKP…KKTV), 1128-1148 (MLQN…QERK), and 1254-1278 (RLKR…MKER). 3 stretches are compositionally biased toward basic and acidic residues: residues 995–1004 (QQKDDKEPQP), 1139–1148 (SREREEQERK), and 1254–1270 (RLKR…PPEK). The segment at residues 1216–1294 (VRIRTTKDEE…CGACGAIGHM (79 aa)) is a DNA-binding region (HMG box). The tract at residues 1363–1650 (VLKFPKQQLP…TAKEAALEEA (288 aa)) is interaction with ASF1A and ASF1B. The Nuclear localization signal signature appears at 1372 to 1379 (PPKKKRRV). 2 Bromo domains span residues 1397-1505 (RRRT…LKEK) and 1519-1628 (LLDD…LTEY). In terms of domain architecture, Protein kinase 2 spans 1446-1891 (MDLQTLRENV…AGDTDLDSDE (446 aa)). Disordered stretches follow at residues 1651–1676 (ELES…NNTS) and 1690–1891 (SNLS…DSDE). Residues 1659–1668 (TPGPYTPQPP) show a composition bias toward pro residues. 2 positions are modified to phosphoserine: Ser-1690 and Ser-1693. The span at 1690-1708 (SNLSVLDIPSATSEKQLTQ) shows a compositional bias: polar residues. Composition is skewed to acidic residues over residues 1711–1723 (GDGD…EEEG) and 1741–1756 (EGED…EEGD). Residues 1764–1778 (LSESGSDSDVESGSL) show a composition bias toward low complexity. Ser-1799, Ser-1802, and Ser-1820 each carry phosphoserine. The span at 1830 to 1840 (KSNTQDTSFSS) shows a compositional bias: polar residues. A compositionally biased stretch (acidic residues) spans 1846–1855 (VSEEEEDEEE). Residue Ser-1847 is modified to Phosphoserine. Over residues 1858–1867 (SGPSVLSQVH) the composition is skewed to polar residues.

It belongs to the TAF1 family. In terms of assembly, component of the TFIID basal transcription factor complex, composed of TATA-box-binding protein TBP, and a number of TBP-associated factors (TAFs). TFIID consists of at least TBP, TAF1, TAF2, TAF3, TAF4, TAF5, TAF6, TAF7, TAF8, TAF9, TAF10, TAF11, TAF12 and TAF13. Interacts with TAF7; the interaction is direct. TAF1, when part of the TFIID complex, interacts with C-terminus of TP53. Part of a TFIID-containing RNA polymerase II pre-initiation complex that is composed of TBP and at least GTF2A1, GTF2A2, GTF2E1, GTF2E2, GTF2F1, GTF2H2, GTF2H3, GTF2H4, GTF2H5, GTF2B, TCEA1, ERCC2, ERCC3, TAF1, TAF2, TAF3, TAF4, TAF5, TAF6, TAF7, TAF8, TAF9, TAF10, TAF11, TAF12 and TAF13. Component of some MLL1/MLL complex, at least composed of the core components KMT2A/MLL1, ASH2L, HCFC1/HCF1, WDR5 and RBBP5, as well as the facultative components BACC1, CHD8, E2F6, HSP70, INO80C, KANSL1, LAS1L, MAX, MCRS1, MGA, KAT8/MOF, PELP1, PHF20, PRP31, RING2, RUVB1/TIP49A, RUVB2/TIP49B, SENP3, TAF1, TAF4, TAF6, TAF7, TAF9 and TEX10. RB1 interacts with the N-terminal domain of TAF1. Interacts with ASF1A and ASF1B. Interacts (via bromo domains) with acetylated lysine residues on the N-terminus of histone H1.4, H2A, H2B, H3 and H4 (in vitro). Requires Mg(2+) as cofactor. In terms of processing, phosphorylated by casein kinase II in vitro.

The protein localises to the nucleus. The catalysed reaction is L-seryl-[protein] + ATP = O-phospho-L-seryl-[protein] + ADP + H(+). It carries out the reaction L-threonyl-[protein] + ATP = O-phospho-L-threonyl-[protein] + ADP + H(+). The enzyme catalyses L-lysyl-[protein] + acetyl-CoA = N(6)-acetyl-L-lysyl-[protein] + CoA + H(+). With respect to regulation, autophosphorylates on Ser residues. Inhibited by retinoblastoma tumor suppressor protein, RB1. Binding to TAF1 or CIITA inhibits the histone acetyltransferase activity. The TFIID basal transcription factor complex plays a major role in the initiation of RNA polymerase II (Pol II)-dependent transcription. TFIID recognizes and binds promoters with or without a TATA box via its subunit TBP, a TATA-box-binding protein, and promotes assembly of the pre-initiation complex (PIC). The TFIID complex consists of TBP and TBP-associated factors (TAFs), including TAF1, TAF2, TAF3, TAF4, TAF5, TAF6, TAF7, TAF8, TAF9, TAF10, TAF11, TAF12 and TAF13. TAF1 is the largest component and core scaffold of the TFIID complex, involved in nucleating complex assembly. TAF1 forms a promoter DNA binding subcomplex of TFIID, together with TAF7 and TAF2. Contains novel N- and C-terminal Ser/Thr kinase domains which can autophosphorylate or transphosphorylate other transcription factors. Phosphorylates TP53 on 'Thr-55' which leads to MDM2-mediated degradation of TP53. Phosphorylates GTF2A1 and GTF2F1 on Ser residues. Possesses DNA-binding activity. Exhibits histone acetyltransferase activity towards histones H3 and H4. Essential for progression of the G1 phase of the cell cycle. The chain is Transcription initiation factor TFIID subunit 1 from Mus musculus (Mouse).